We begin with the raw amino-acid sequence, 1205 residues long: Chromosome partition protein Smc (1205 aa).

Proline 32–asparagine 39 is a binding site for ATP. 2 coiled-coil regions span residues lysine 169–histidine 288 and glutamate 330–arginine 499. Residues glycine 514–leucine 628 enclose the SMC hinge domain. 3 coiled-coil regions span residues leucine 661–threonine 771, alanine 802–glutamine 836, and aspartate 979–leucine 1033.

Belongs to the SMC family. As to quaternary structure, homodimer.

The protein localises to the cytoplasm. Its function is as follows. Required for chromosome condensation and partitioning. This is Chromosome partition protein Smc from Mycobacterium tuberculosis (strain ATCC 25618 / H37Rv).